The chain runs to 174 residues: Co-chaperone protein HscB (174 aa).

One can recognise a J domain in the interval 2 to 74 (NYFALFDLPR…LNRAIYFLCL (73 aa)).

This sequence belongs to the HscB family. Interacts with HscA and stimulates its ATPase activity. Interacts with IscU.

Its function is as follows. Co-chaperone involved in the maturation of iron-sulfur cluster-containing proteins. Seems to help targeting proteins to be folded toward HscA. This is Co-chaperone protein HscB from Buchnera aphidicola subsp. Acyrthosiphon pisum (strain 5A).